We begin with the raw amino-acid sequence, 380 residues long: Lipid-A-disaccharide synthase (380 aa).

The protein belongs to the LpxB family.

The enzyme catalyses a lipid X + a UDP-2-N,3-O-bis[(3R)-3-hydroxyacyl]-alpha-D-glucosamine = a lipid A disaccharide + UDP + H(+). It participates in bacterial outer membrane biogenesis; LPS lipid A biosynthesis. Its function is as follows. Condensation of UDP-2,3-diacylglucosamine and 2,3-diacylglucosamine-1-phosphate to form lipid A disaccharide, a precursor of lipid A, a phosphorylated glycolipid that anchors the lipopolysaccharide to the outer membrane of the cell. This Azotobacter vinelandii (strain DJ / ATCC BAA-1303) protein is Lipid-A-disaccharide synthase.